Reading from the N-terminus, the 449-residue chain is Zinc finger and BTB domain-containing protein 14 (449 aa).

In terms of domain architecture, BTB spans 36-102 (CDIAIVVEDV…MYTAKISVKK (67 aa)). A Glycyl lysine isopeptide (Lys-Gly) (interchain with G-Cter in SUMO2) cross-link involves residue lysine 46. The Nuclear localization signal signature appears at 50–66 (HRCVLAACSTYFKKLFK). The tract at residues 153 to 194 (GDAADTQDDDVEEIGDQDDSPSDDTVEGTPPSQEDGKSPTTT) is disordered. Residues 157 to 178 (DTQDDDVEEIGDQDDSPSDDTV) are compositionally biased toward acidic residues. Residues lysine 203 and lysine 249 each participate in a glycyl lysine isopeptide (Lys-Gly) (interchain with G-Cter in SUMO2) cross-link. 5 consecutive C2H2-type zinc fingers follow at residues 277 to 304 (IACQACGKTFSDEGRLRKHEKLHTADRP), 305 to 332 (FVCEMCTKGFTTQAHLKEHLKIHTGYKP), 333 to 360 (YSCEVCGKSFIRAPDLKKHERVHSNERP), 361 to 388 (FACHMCDKAFKHKSHLKDHERRHRGEKP), and 389 to 417 (FVCGSCTKAFAKASDLKRHENNMHSERKQ).

Belongs to the krueppel C2H2-type zinc-finger protein family. As to quaternary structure, interacts with ZBTB21.

The protein resides in the nucleus. Its function is as follows. Transcriptional activator of the dopamine transporter (DAT), binding it's promoter at the consensus sequence 5'-CCTGCACAGTTCACGGA-3'. Binds to 5'-d(GCC)(n)-3' trinucleotide repeats in promoter regions and acts as a repressor of the FMR1 gene. Transcriptional repressor of MYC and thymidine kinase promoters. The protein is Zinc finger and BTB domain-containing protein 14 (ZBTB14) of Homo sapiens (Human).